A 436-amino-acid polypeptide reads, in one-letter code: Acetylcholine receptor non-alpha chain (436 aa).

Residues 1–195 (IIDVHEIDQI…IFYLELRRKP (195 aa)) are Extracellular-facing. The N-linked (GlcNAc...) asparagine glycan is linked to Asn62. Residues Cys89 and Cys103 are joined by a disulfide bond. N-linked (GlcNAc...) asparagine glycosylation occurs at Asn140. 3 helical membrane-spanning segments follow: residues 196-219 (LFYT…AFYL), 227-245 (VTLC…LLLK), and 261-280 (YLLF…VISL). At 281-404 (NLHFRRPSTH…WKFVARVLDR (124 aa)) the chain is on the cytoplasmic side. A helical transmembrane segment spans residues 405 to 423 (LFLLLFSIACFLGTILILF).

The protein belongs to the ligand-gated ion channel (TC 1.A.9) family. Acetylcholine receptor (TC 1.A.9.1) subfamily.

It localises to the postsynaptic cell membrane. Its subcellular location is the cell membrane. Functionally, after binding acetylcholine, the AChR responds by an extensive change in conformation that affects all subunits and leads to opening of an ion-conducting channel across the plasma membrane. This chain is Acetylcholine receptor non-alpha chain, found in Onchocerca volvulus.